The sequence spans 194 residues: Peptidyl-tRNA hydrolase (194 aa).

Position 16 (Tyr16) interacts with tRNA. The active-site Proton acceptor is His21. TRNA is bound by residues Phe66, Asn68, and Asn114.

It belongs to the PTH family. As to quaternary structure, monomer.

The protein localises to the cytoplasm. It carries out the reaction an N-acyl-L-alpha-aminoacyl-tRNA + H2O = an N-acyl-L-amino acid + a tRNA + H(+). Its function is as follows. Hydrolyzes ribosome-free peptidyl-tRNAs (with 1 or more amino acids incorporated), which drop off the ribosome during protein synthesis, or as a result of ribosome stalling. Functionally, catalyzes the release of premature peptidyl moieties from peptidyl-tRNA molecules trapped in stalled 50S ribosomal subunits, and thus maintains levels of free tRNAs and 50S ribosomes. This is Peptidyl-tRNA hydrolase from Geobacter metallireducens (strain ATCC 53774 / DSM 7210 / GS-15).